We begin with the raw amino-acid sequence, 309 residues long: Methionyl-tRNA formyltransferase (309 aa).

109–112 (SLLP) contacts (6S)-5,6,7,8-tetrahydrofolate.

It belongs to the Fmt family.

The enzyme catalyses L-methionyl-tRNA(fMet) + (6R)-10-formyltetrahydrofolate = N-formyl-L-methionyl-tRNA(fMet) + (6S)-5,6,7,8-tetrahydrofolate + H(+). Attaches a formyl group to the free amino group of methionyl-tRNA(fMet). The formyl group appears to play a dual role in the initiator identity of N-formylmethionyl-tRNA by promoting its recognition by IF2 and preventing the misappropriation of this tRNA by the elongation apparatus. The sequence is that of Methionyl-tRNA formyltransferase from Clostridium botulinum (strain Alaska E43 / Type E3).